A 429-amino-acid polypeptide reads, in one-letter code: UDP-N-acetylglucosamine 1-carboxyvinyltransferase (429 aa).

A phosphoenolpyruvate-binding site is contributed by 22–23 (KN). Residue Arg102 coordinates UDP-N-acetyl-alpha-D-glucosamine. Cys126 serves as the catalytic Proton donor. Cys126 carries the 2-(S-cysteinyl)pyruvic acid O-phosphothioketal modification. Residues 131-135 (RPVDL), 171-174 (KVSV), Asp316, and Ile338 each bind UDP-N-acetyl-alpha-D-glucosamine.

It belongs to the EPSP synthase family. MurA subfamily.

Its subcellular location is the cytoplasm. It catalyses the reaction phosphoenolpyruvate + UDP-N-acetyl-alpha-D-glucosamine = UDP-N-acetyl-3-O-(1-carboxyvinyl)-alpha-D-glucosamine + phosphate. Its pathway is cell wall biogenesis; peptidoglycan biosynthesis. In terms of biological role, cell wall formation. Adds enolpyruvyl to UDP-N-acetylglucosamine. In Brucella abortus (strain S19), this protein is UDP-N-acetylglucosamine 1-carboxyvinyltransferase.